A 294-amino-acid polypeptide reads, in one-letter code: MKTKIIVIVGPTAVGKTALAIEVAKRFNGEVVSGDSQQVYRGLDIGTAKASPEEQAAVPHHLIDVREITESYSAFDFVSEAKMTIEDIHSRGKLAIIAGGTGLYIQSLLEGYHLGGETPHEEILAYRASLEPYSDXELAHLVEQAGLEIPQFNRRRAMRALEIAHFGQDLENQEILYEPLIICLDDERSQLYERINHRVDLMFEAGLLDEAKWLFDHSPNVQAAKGIGYKELFPYFRGEQTFEEARESLKQATRRFAKRQLTWFRNRMQVTFYQIGESGVQDRILSQIEEFLDD.

10–17 serves as a coordination point for ATP; that stretch reads GPTAVGKT. Residue 12–17 coordinates substrate; that stretch reads TAVGKT. The interaction with substrate tRNA stretch occupies residues 35–38; the sequence is DSQQ.

This sequence belongs to the IPP transferase family. Monomer. Mg(2+) is required as a cofactor.

It carries out the reaction adenosine(37) in tRNA + dimethylallyl diphosphate = N(6)-dimethylallyladenosine(37) in tRNA + diphosphate. Its function is as follows. Catalyzes the transfer of a dimethylallyl group onto the adenine at position 37 in tRNAs that read codons beginning with uridine, leading to the formation of N6-(dimethylallyl)adenosine (i(6)A). The polypeptide is tRNA dimethylallyltransferase (Streptococcus pneumoniae serotype 19F (strain G54)).